Here is a 441-residue protein sequence, read N- to C-terminus: tRNA-2-methylthio-N(6)-dimethylallyladenosine synthase (441 aa).

Residues 5–121 (KKLYLETFGC…LQGMVAAAEE (117 aa)) enclose the MTTase N-terminal domain. Residues cysteine 14, cysteine 50, cysteine 84, cysteine 159, cysteine 163, and cysteine 166 each coordinate [4Fe-4S] cluster. The Radical SAM core domain maps to 145–375 (AEGGVTRFVT…QAAQKKTTLA (231 aa)). The region spanning 378 to 440 (RSLEGTVQKV…QTLLKGEIVH (63 aa)) is the TRAM domain.

The protein belongs to the methylthiotransferase family. MiaB subfamily. As to quaternary structure, monomer. [4Fe-4S] cluster serves as cofactor.

Its subcellular location is the cytoplasm. It catalyses the reaction N(6)-dimethylallyladenosine(37) in tRNA + (sulfur carrier)-SH + AH2 + 2 S-adenosyl-L-methionine = 2-methylsulfanyl-N(6)-dimethylallyladenosine(37) in tRNA + (sulfur carrier)-H + 5'-deoxyadenosine + L-methionine + A + S-adenosyl-L-homocysteine + 2 H(+). In terms of biological role, catalyzes the methylthiolation of N6-(dimethylallyl)adenosine (i(6)A), leading to the formation of 2-methylthio-N6-(dimethylallyl)adenosine (ms(2)i(6)A) at position 37 in tRNAs that read codons beginning with uridine. This is tRNA-2-methylthio-N(6)-dimethylallyladenosine synthase from Citrifermentans bemidjiense (strain ATCC BAA-1014 / DSM 16622 / JCM 12645 / Bem) (Geobacter bemidjiensis).